A 171-amino-acid polypeptide reads, in one-letter code: Ribosome maturation factor RimM (171 aa).

The region spanning 96 to 170 (AEGEYYYHEI…LVTIHVTEGL (75 aa)) is the PRC barrel domain.

The protein belongs to the RimM family. Binds ribosomal protein uS19.

It is found in the cytoplasm. An accessory protein needed during the final step in the assembly of 30S ribosomal subunit, possibly for assembly of the head region. Essential for efficient processing of 16S rRNA. May be needed both before and after RbfA during the maturation of 16S rRNA. It has affinity for free ribosomal 30S subunits but not for 70S ribosomes. The protein is Ribosome maturation factor RimM of Bacillus anthracis (strain A0248).